The following is a 746-amino-acid chain: Protein O-mannosyl-transferase 1 (746 aa).

7 consecutive transmembrane segments (helical) span residues 30–50 (PLVVTVDINLNLVALTGLGLL), 90–110 (FGHMLLALGGWLGGFDGNFLW), 121–141 (VPIWSLRLLPALAGALSVPMA), 144–164 (IVLELHFSHGAAIGAALLMLI), 176–196 (LLESILIFFNLLAVLSYLKFF), 228–248 (MGIFTYLLVLGIAAVHAWNLI), and 266–286 (IVALLVVPVFLYLLFFYVHLM). MIR domains are found at residues 318–381 (PLEV…VKDP), 392–449 (PRPV…LDIV), and 453–513 (SNRD…VEEH). 3 N-linked (GlcNAc...) asparagine glycosylation sites follow: Asn-435, Asn-471, and Asn-539. The next 3 helical transmembrane spans lie at 597 to 617 (IVIWTSASLATVVYTLLFFWY), 636 to 656 (WVLAGALCTGGWALNYLPFFL), and 660 to 680 (VLFLYHYLPALTFQILLLPIV).

Belongs to the glycosyltransferase 39 family.

It localises to the endoplasmic reticulum membrane. It carries out the reaction a di-trans,poly-cis-dolichyl beta-D-mannosyl phosphate + L-seryl-[protein] = 3-O-(alpha-D-mannosyl)-L-seryl-[protein] + a di-trans,poly-cis-dolichyl phosphate + H(+). The catalysed reaction is a di-trans,poly-cis-dolichyl beta-D-mannosyl phosphate + L-threonyl-[protein] = 3-O-(alpha-D-mannosyl)-L-threonyl-[protein] + a di-trans,poly-cis-dolichyl phosphate + H(+). It participates in protein modification; protein glycosylation. Functionally, transfers mannosyl residues to the hydroxyl group of serine or threonine residues. Coexpression of both POMT1 and POMT2 is necessary for enzyme activity, expression of either POMT1 or POMT2 alone is insufficient. Essentially dedicated to O-mannosylation of alpha-DAG1 and few other proteins but not of cadherins and protocaherins. This chain is Protein O-mannosyl-transferase 1 (Pomt1), found in Mus musculus (Mouse).